Reading from the N-terminus, the 130-residue chain is uncharacterized protein (130 aa).

The tract at residues M1–A34 is disordered.

The protein to M.tuberculosis Rv1583c.

This is an uncharacterized protein from Mycobacterium tuberculosis (strain CDC 1551 / Oshkosh).